Reading from the N-terminus, the 467-residue chain is NADH-quinone oxidoreductase subunit H (467 aa).

A run of 9 helical transmembrane segments spans residues 18-38, 88-108, 131-151, 172-192, 206-226, 256-276, 296-316, 328-348, and 363-383; these read WWLV…TVLF, AVYV…IAVI, LPIA…GIVL, MISY…YSGS, WYIV…VGET, FMLA…TLFL, WWPL…FIWL, LMKL…MLVA, and IALY…LVDM. The segment at 389-467 is disordered; sequence GKAADQPAET…PTDGKEASDG (79 aa). Positions 418 to 430 are enriched in pro residues; that stretch reads PVPPMPGQQVPPV.

It belongs to the complex I subunit 1 family. In terms of assembly, NDH-1 is composed of 14 different subunits. Subunits NuoA, H, J, K, L, M, N constitute the membrane sector of the complex.

It localises to the cell membrane. The enzyme catalyses a quinone + NADH + 5 H(+)(in) = a quinol + NAD(+) + 4 H(+)(out). Its function is as follows. NDH-1 shuttles electrons from NADH, via FMN and iron-sulfur (Fe-S) centers, to quinones in the respiratory chain. The immediate electron acceptor for the enzyme in this species is believed to be ubiquinone. Couples the redox reaction to proton translocation (for every two electrons transferred, four hydrogen ions are translocated across the cytoplasmic membrane), and thus conserves the redox energy in a proton gradient. This subunit may bind ubiquinone. This chain is NADH-quinone oxidoreductase subunit H, found in Streptomyces coelicolor (strain ATCC BAA-471 / A3(2) / M145).